We begin with the raw amino-acid sequence, 47 residues long: Large ribosomal subunit protein bL33C (47 aa).

Belongs to the bacterial ribosomal protein bL33 family.

This chain is Large ribosomal subunit protein bL33C, found in Staphylococcus epidermidis (strain ATCC 35984 / DSM 28319 / BCRC 17069 / CCUG 31568 / BM 3577 / RP62A).